Reading from the N-terminus, the 151-residue chain is Ribosome maturation factor RimP (151 aa).

The protein belongs to the RimP family.

Its subcellular location is the cytoplasm. Required for maturation of 30S ribosomal subunits. The polypeptide is Ribosome maturation factor RimP (Vibrio atlanticus (strain LGP32) (Vibrio splendidus (strain Mel32))).